The following is a 355-amino-acid chain: Methionine import ATP-binding protein MetN (355 aa).

In terms of domain architecture, ABC transporter spans 8–250 (LKNIDITFTQ…PQEDLTQEFI (243 aa)). An ATP-binding site is contributed by 42–49 (GYSGAGKS).

Belongs to the ABC transporter superfamily. Methionine importer (TC 3.A.1.24) family. In terms of assembly, the complex is composed of two ATP-binding proteins (MetN), two transmembrane proteins (MetI) and a solute-binding protein (MetQ).

It is found in the cell membrane. The catalysed reaction is L-methionine(out) + ATP + H2O = L-methionine(in) + ADP + phosphate + H(+). It carries out the reaction D-methionine(out) + ATP + H2O = D-methionine(in) + ADP + phosphate + H(+). Its function is as follows. Part of the ABC transporter complex MetNIQ involved in methionine import. Responsible for energy coupling to the transport system. The chain is Methionine import ATP-binding protein MetN from Streptococcus thermophilus (strain ATCC BAA-250 / LMG 18311).